A 674-amino-acid polypeptide reads, in one-letter code: 1,4-alpha-glucan branching enzyme GlgB 1 (674 aa).

The active-site Nucleophile is the D336. The Proton donor role is filled by E389.

The protein belongs to the glycosyl hydrolase 13 family. GlgB subfamily. Monomer.

It carries out the reaction Transfers a segment of a (1-&gt;4)-alpha-D-glucan chain to a primary hydroxy group in a similar glucan chain.. It participates in glycan biosynthesis; glycogen biosynthesis. Its function is as follows. Catalyzes the formation of the alpha-1,6-glucosidic linkages in glycogen by scission of a 1,4-alpha-linked oligosaccharide from growing alpha-1,4-glucan chains and the subsequent attachment of the oligosaccharide to the alpha-1,6 position. This is 1,4-alpha-glucan branching enzyme GlgB 1 (glgB1) from Clostridium perfringens (strain 13 / Type A).